The primary structure comprises 131 residues: uncharacterized protein (131 aa).

An N-terminal signal peptide occupies residues 1–19 (MRESLFIIFFQFVCHSSNS). 2 consecutive transmembrane segments (helical) span residues 33–53 (PLLTWTAPSIDLALSILALFF) and 111–131 (VSFNGDLIIIFVGETIFFFLF).

Its subcellular location is the membrane. This is an uncharacterized protein from Saccharomyces cerevisiae (strain ATCC 204508 / S288c) (Baker's yeast).